A 353-amino-acid chain; its full sequence is Photosystem II D2 protein (353 aa).

Thr-2 is subject to N-acetylthreonine. Phosphothreonine is present on Thr-2. The chain crosses the membrane as a helical span at residues 41–61 (CAYFALGGWFTGTTFVTSWYT). His-118 lines the chlorophyll a pocket. A helical transmembrane segment spans residues 125 to 141 (GFMLRQFELARSVQLRP). Residues Gln-130 and Asn-143 each contribute to the pheophytin a site. Residues 153-166 (VFVSVFLIYPLGQS) form a helical membrane-spanning segment. His-198 is a chlorophyll a binding site. Residues 208–228 (AALLCAIHGATVENTLFEDGD) form a helical membrane-spanning segment. 2 residues coordinate a plastoquinone: His-215 and Phe-262. His-215 is a Fe cation binding site. His-269 contacts Fe cation. A helical membrane pass occupies residues 279–295 (GLWMSAIGVVGLALNLR).

Belongs to the reaction center PufL/M/PsbA/D family. As to quaternary structure, PSII is composed of 1 copy each of membrane proteins PsbA, PsbB, PsbC, PsbD, PsbE, PsbF, PsbH, PsbI, PsbJ, PsbK, PsbL, PsbM, PsbT, PsbX, PsbY, PsbZ, Psb30/Ycf12, at least 3 peripheral proteins of the oxygen-evolving complex and a large number of cofactors. It forms dimeric complexes. The D1/D2 heterodimer binds P680, chlorophylls that are the primary electron donor of PSII, and subsequent electron acceptors. It shares a non-heme iron and each subunit binds pheophytin, quinone, additional chlorophylls, carotenoids and lipids. There is also a Cl(-1) ion associated with D1 and D2, which is required for oxygen evolution. The PSII complex binds additional chlorophylls, carotenoids and specific lipids. is required as a cofactor.

Its subcellular location is the plastid. The protein resides in the chloroplast thylakoid membrane. It catalyses the reaction 2 a plastoquinone + 4 hnu + 2 H2O = 2 a plastoquinol + O2. Functionally, photosystem II (PSII) is a light-driven water:plastoquinone oxidoreductase that uses light energy to abstract electrons from H(2)O, generating O(2) and a proton gradient subsequently used for ATP formation. It consists of a core antenna complex that captures photons, and an electron transfer chain that converts photonic excitation into a charge separation. The D1/D2 (PsbA/PsbD) reaction center heterodimer binds P680, the primary electron donor of PSII as well as several subsequent electron acceptors. D2 is needed for assembly of a stable PSII complex. This chain is Photosystem II D2 protein, found in Pinus thunbergii (Japanese black pine).